Here is a 685-residue protein sequence, read N- to C-terminus: ATP-dependent permease MDL1 (685 aa).

The segment covering F48–S70 has biased composition (polar residues). The disordered stretch occupies residues F48–R76. A glycan (N-linked (GlcNAc...) asparagine) is linked at N63. A helical transmembrane segment spans residues L96–L116. An ABC transmembrane type-1 domain is found at I97–K407. The segment at T125–D147 is disordered. Residues D129–D141 are compositionally biased toward acidic residues. Residues F158–L180 form a helical membrane-spanning segment. N239 is a glycosylation site (N-linked (GlcNAc...) asparagine). A helical membrane pass occupies residues L266 to Y282. An N-linked (GlcNAc...) asparagine glycan is attached at N336. The next 2 helical transmembrane spans lie at G353–A373 and L381–F401. The region spanning I440–K680 is the ABC transporter domain. ATP is bound at residue G475–S482. Residues N553 and N576 are each glycosylated (N-linked (GlcNAc...) asparagine).

Belongs to the ABC transporter superfamily. ABCB family. Mitochondrial peptide exporter (TC 3.A.1.212) subfamily.

It is found in the membrane. This chain is ATP-dependent permease MDL1 (MDL1), found in Candida albicans (Yeast).